Here is an 825-residue protein sequence, read N- to C-terminus: MKILKLPWLTHQEGQRNYEIYTVDVSSDGQRVATGGLDGKIRIWSVADILVFAKPKVSWPAREEQLRKPLANMSRHTGSVTALKFSPDNKYLASGSDDKILLIWEKEEGAVQPLFDMENDLEHWNVRRRLVAHDNDIQDICWAPDSSILVTVGLDRSIIVWNGSTFEKIKRFDVHQSHVKGVVFDPANKYFATASDDRTVKVFRYHKGTDLSFTIEHIITEPFQGSPLTTYFRRLSWSPDGQHIAVPNATNGPVSTVAIISRGNWDTSVSLVGHDQPTEVACFNPRLFEHNDNHERGEEVDGASKDNSAASESSGKRRLKDDDRVDSVIATAGQDKTLAVWSTSRARPIFVAYDLTSKSVTDIAWTCDGTALFLTSLDGRIIVITFEEGELGKAIPLEQNVEQLHRYGVDKDSLVFPESVKQLILEDKARQYKKPYIETTLLESRIGTVKKPNVLNPRPKHAKNDVAVASIPQAQAPALKKKEGPLNAATVQNGKKRVAPTLISTGYARAATVKFEPRSSIDSDFAGKKEPLKDTSYALAGKISQPSLPLPRLGVHTLIMGVKERGAERFYVEDEESMDDDAEVADEEDETKNEHPLTLNLKTTPERVWKDEPNLRYLEYPGVIPDADVVICQYGDLDDLHILEIRNGVERSIQFDREALFENPTKILGYHQGERTLEAFLPEVVISCVGSKACQCWALATASGSLYIYGNHGQLLVPKISIGHKVIKLIAWQHFVIAFTETCLFWIWDIRAMKLVEKEISVLPVLVQDQPQCNRVRISRRILDFRMLADSHELLVEMSDGASYVWKRALGCWTDTIGQSTPVTA.

WD repeat units follow at residues 15–54 (QRNYEIYTVDVSSDGQRVATGGLDGKIRIWSVADILVFAK), 75–114 (RHTGSVTALKFSPDNKYLASGSDDKILLIWEKEEGAVQPL), 132–171 (AHDNDIQDICWAPDSSILVTVGLDRSIIVWNGSTFEKIKR), 174–213 (VHQSHVKGVVFDPANKYFATASDDRTVKVFRYHKGTDLSF), and 227–270 (PLTT…TSVS). Residues 294–304 (HERGEEVDGAS) show a composition bias toward basic and acidic residues. Residues 294–320 (HERGEEVDGASKDNSAASESSGKRRLK) form a disordered region. WD repeat units lie at residues 309-351 (AASE…PIFV) and 355-396 (LTSK…KAIP). Residues 574-591 (DEESMDDDAEVADEEDET) are compositionally biased toward acidic residues. The interval 574–595 (DEESMDDDAEVADEEDETKNEH) is disordered.

It belongs to the WD repeat HIR1 family.

It localises to the nucleus. In terms of biological role, required for replication-independent chromatin assembly and for the periodic repression of histone gene transcription during the cell cycle. The chain is Protein HIR1 (HIR1) from Eremothecium gossypii (strain ATCC 10895 / CBS 109.51 / FGSC 9923 / NRRL Y-1056) (Yeast).